Reading from the N-terminus, the 461-residue chain is Argininosuccinate lyase (461 aa).

Belongs to the lyase 1 family. Argininosuccinate lyase subfamily.

The protein localises to the cytoplasm. It carries out the reaction 2-(N(omega)-L-arginino)succinate = fumarate + L-arginine. It participates in amino-acid biosynthesis; L-arginine biosynthesis; L-arginine from L-ornithine and carbamoyl phosphate: step 3/3. This is Argininosuccinate lyase from Desulfitobacterium hafniense (strain DSM 10664 / DCB-2).